Here is a 296-residue protein sequence, read N- to C-terminus: Ribosomal RNA small subunit methyltransferase A (296 aa).

Asn30, Leu32, Gly57, Glu78, Asp103, and Asn128 together coordinate S-adenosyl-L-methionine.

It belongs to the class I-like SAM-binding methyltransferase superfamily. rRNA adenine N(6)-methyltransferase family. RsmA subfamily.

The protein localises to the cytoplasm. It carries out the reaction adenosine(1518)/adenosine(1519) in 16S rRNA + 4 S-adenosyl-L-methionine = N(6)-dimethyladenosine(1518)/N(6)-dimethyladenosine(1519) in 16S rRNA + 4 S-adenosyl-L-homocysteine + 4 H(+). Its function is as follows. Specifically dimethylates two adjacent adenosines (A1518 and A1519) in the loop of a conserved hairpin near the 3'-end of 16S rRNA in the 30S particle. May play a critical role in biogenesis of 30S subunits. The protein is Ribosomal RNA small subunit methyltransferase A of Staphylococcus epidermidis (strain ATCC 35984 / DSM 28319 / BCRC 17069 / CCUG 31568 / BM 3577 / RP62A).